A 1549-amino-acid polypeptide reads, in one-letter code: Ferredoxin-dependent glutamate synthase (1549 aa).

Cysteine 37 serves as the catalytic For GATase activity. Residues 37–435 form the Glutamine amidotransferase type-2 domain; the sequence is CGVGFIAHLD…PGEMIVLDLQ (399 aa). 1116–1173 lines the FMN pocket; that stretch reads LHEVHCLLVENNLREKVILRVDGGLRTGQDVVMAALLGADEYGFGTIAMIAGGCIMAR. [3Fe-4S] cluster is bound by residues cysteine 1169, cysteine 1175, and cysteine 1180.

This sequence belongs to the glutamate synthase family. Monomer. It depends on [3Fe-4S] cluster as a cofactor. FAD serves as cofactor. The cofactor is FMN.

Its subcellular location is the plastid. The protein resides in the chloroplast stroma. It carries out the reaction 2 oxidized [2Fe-2S]-[ferredoxin] + 2 L-glutamate = L-glutamine + 2 reduced [2Fe-2S]-[ferredoxin] + 2-oxoglutarate + 2 H(+). Its pathway is amino-acid biosynthesis; L-glutamate biosynthesis via GLT pathway; L-glutamate from 2-oxoglutarate and L-glutamine (ferredoxin route): step 1/1. It participates in energy metabolism; nitrogen metabolism. This Cyanidium caldarium (Red alga) protein is Ferredoxin-dependent glutamate synthase (gltB).